The sequence spans 165 residues: MRFPSIFTAVLFAASSALAAPVNTTTEDETAQIPAEAVIGYLDLEGDFDVAVLPFSNSTNNGLLFINTTIASIAAKEEGVSLDKREAEAWHWLQLKPGQPMYKREAEAEAWHWLQLKPGQPMYKREADAEAWHWLQLKPGQPMYKREADAEAWHWLQLKPGQPMY.

A signal peptide (or 20) is located at residues 1–19 (MRFPSIFTAVLFAASSALA). Propeptides lie at residues 20-89 (APVN…EAEA), 105-110 (EAEAEA), 126-131 (EADAEA), and 147-152 (EADAEA).

In terms of biological role, the active factor is excreted into the culture medium by haploid cells of the alpha mating type and acts on cells of the opposite mating type (type A). It mediates the conjugation process between the two types by inhibiting the initiation of DNA synthesis in type a cells and synchronizing them with type alpha. The chain is Mating factor alpha-1 (MF(ALPHA)1) from Saccharomyces cerevisiae (strain ATCC 204508 / S288c) (Baker's yeast).